The following is a 234-amino-acid chain: tRNA1(Val) (adenine(37)-N6)-methyltransferase (234 aa).

Belongs to the methyltransferase superfamily. tRNA (adenine-N(6)-)-methyltransferase family.

Its subcellular location is the cytoplasm. The enzyme catalyses adenosine(37) in tRNA1(Val) + S-adenosyl-L-methionine = N(6)-methyladenosine(37) in tRNA1(Val) + S-adenosyl-L-homocysteine + H(+). Its function is as follows. Specifically methylates the adenine in position 37 of tRNA(1)(Val) (anticodon cmo5UAC). The polypeptide is tRNA1(Val) (adenine(37)-N6)-methyltransferase (Phocaeicola vulgatus (strain ATCC 8482 / DSM 1447 / JCM 5826 / CCUG 4940 / NBRC 14291 / NCTC 11154) (Bacteroides vulgatus)).